A 474-amino-acid chain; its full sequence is Citrate synthase, mitochondrial (474 aa).

Residues 1 to 35 (MASTLRLSTSALRSSTLAGKPVVQSVAFNGLRCYS) constitute a mitochondrion transit peptide. Residues histidine 310, histidine 356, and aspartate 411 contribute to the active site.

Belongs to the citrate synthase family.

The protein localises to the mitochondrion matrix. The enzyme catalyses oxaloacetate + acetyl-CoA + H2O = citrate + CoA + H(+). Its pathway is carbohydrate metabolism; tricarboxylic acid cycle; isocitrate from oxaloacetate: step 1/2. This Emericella nidulans (strain FGSC A4 / ATCC 38163 / CBS 112.46 / NRRL 194 / M139) (Aspergillus nidulans) protein is Citrate synthase, mitochondrial (citA).